We begin with the raw amino-acid sequence, 321 residues long: ATP-dependent 6-phosphofructokinase (321 aa).

An ATP-binding site is contributed by glycine 12. 22–26 (RGVVR) serves as a coordination point for ADP. ATP-binding positions include 73 to 74 (RF) and 103 to 106 (GDGS). Mg(2+) is bound at residue aspartate 104. 127 to 129 (TID) is a substrate binding site. Residue aspartate 129 is the Proton acceptor of the active site. Arginine 156 contributes to the ADP binding site. Residues arginine 164 and 171-173 (MGR) contribute to the substrate site. Residues 187-189 (GCE), lysine 213, and 215-217 (KRH) each bind ADP. Substrate contacts are provided by residues glutamate 224, arginine 245, and 251-254 (HTQR).

This sequence belongs to the phosphofructokinase type A (PFKA) family. ATP-dependent PFK group I subfamily. Prokaryotic clade 'B1' sub-subfamily. Homotetramer. Mg(2+) is required as a cofactor.

The protein resides in the cytoplasm. The catalysed reaction is beta-D-fructose 6-phosphate + ATP = beta-D-fructose 1,6-bisphosphate + ADP + H(+). It functions in the pathway carbohydrate degradation; glycolysis; D-glyceraldehyde 3-phosphate and glycerone phosphate from D-glucose: step 3/4. Its activity is regulated as follows. Allosterically activated by ADP and other diphosphonucleosides, and allosterically inhibited by phosphoenolpyruvate. Catalyzes the phosphorylation of D-fructose 6-phosphate to fructose 1,6-bisphosphate by ATP, the first committing step of glycolysis. The chain is ATP-dependent 6-phosphofructokinase from Glaesserella parasuis serovar 5 (strain SH0165) (Haemophilus parasuis).